A 257-amino-acid polypeptide reads, in one-letter code: 4-diphosphocytidyl-2-C-methyl-D-erythritol kinase (257 aa).

Lysine 8 is an active-site residue. Residue 91–101 (PMGGGLGGGSA) participates in ATP binding. Residue aspartate 131 is part of the active site.

The protein belongs to the GHMP kinase family. IspE subfamily.

It carries out the reaction 4-CDP-2-C-methyl-D-erythritol + ATP = 4-CDP-2-C-methyl-D-erythritol 2-phosphate + ADP + H(+). Its pathway is isoprenoid biosynthesis; isopentenyl diphosphate biosynthesis via DXP pathway; isopentenyl diphosphate from 1-deoxy-D-xylulose 5-phosphate: step 3/6. Catalyzes the phosphorylation of the position 2 hydroxy group of 4-diphosphocytidyl-2C-methyl-D-erythritol. The sequence is that of 4-diphosphocytidyl-2-C-methyl-D-erythritol kinase from Petrotoga mobilis (strain DSM 10674 / SJ95).